Reading from the N-terminus, the 423-residue chain is Lysosomal acid phosphatase (423 aa).

An N-terminal signal peptide occupies residues 1 to 30; it reads MAGRRFGWSRAALLQLILGVNLMVMPRTQA. The Lumenal portion of the chain corresponds to 31–380; the sequence is RTLRFVTLLY…QLAGGPADTE (350 aa). H42 functions as the Nucleophile in the catalytic mechanism. N92, N133, N167, N177, N191, and N267 each carry an N-linked (GlcNAc...) asparagine glycan. Cystine bridges form between C159–C370, C212–C310, and C345–C349. D287 acts as the Proton donor in catalysis. 2 N-linked (GlcNAc...) asparagine glycosylation sites follow: N322 and N331. A helical transmembrane segment spans residues 381-401; that stretch reads VIVALAVCGSILFLLIVLLLT. Residues 402-423 are Cytoplasmic-facing; the sequence is VLFRVQAQPPGYRHVPDGEDHA.

It belongs to the histidine acid phosphatase family. In terms of processing, the membrane-bound form is converted to the soluble form by sequential proteolytic processing. First, the C-terminal cytoplasmic tail is removed. Cleavage by a lysosomal protease releases the soluble form in the lysosome lumen.

It localises to the lysosome membrane. It is found in the lysosome lumen. The catalysed reaction is a phosphate monoester + H2O = an alcohol + phosphate. The polypeptide is Lysosomal acid phosphatase (ACP2) (Bos taurus (Bovine)).